The following is a 229-amino-acid chain: Ribose-5-phosphate isomerase A (229 aa).

Residues 28 to 31, 84 to 87, and 97 to 100 contribute to the substrate site; these read TGST, DGAD, and KGGG. Glutamate 106 functions as the Proton acceptor in the catalytic mechanism. Lysine 124 contacts substrate.

This sequence belongs to the ribose 5-phosphate isomerase family. Homodimer.

It catalyses the reaction aldehydo-D-ribose 5-phosphate = D-ribulose 5-phosphate. Its pathway is carbohydrate degradation; pentose phosphate pathway; D-ribose 5-phosphate from D-ribulose 5-phosphate (non-oxidative stage): step 1/1. In terms of biological role, catalyzes the reversible conversion of ribose-5-phosphate to ribulose 5-phosphate. This Lacticaseibacillus paracasei (strain ATCC 334 / BCRC 17002 / CCUG 31169 / CIP 107868 / KCTC 3260 / NRRL B-441) (Lactobacillus paracasei) protein is Ribose-5-phosphate isomerase A.